A 204-amino-acid polypeptide reads, in one-letter code: WW domain-containing protein C11B10.08 (204 aa).

Residues 7–43 form the WW domain; it reads EGLPNGWVAQWDERYKCYFYVNESDPKAKPQWECPVR. The interval 32 to 117 is disordered; that stretch reads PKAKPQWECP…GYPQQPYYYP (86 aa). Low complexity-rich tracts occupy residues 66–100 and 108–117; these read YSNSAAPATPAASASSAAPAPAPAASQNRAYGAAP and GYPQQPYYYP.

Its subcellular location is the cytoplasm. It localises to the nucleus. This chain is WW domain-containing protein C11B10.08, found in Schizosaccharomyces pombe (strain 972 / ATCC 24843) (Fission yeast).